The sequence spans 403 residues: Dual-specificity RNA methyltransferase RlmN (403 aa).

The active-site Proton acceptor is the E126. The 244-residue stretch at 132-375 (ETDRGTLCVS…VRTPRGRDIL (244 aa)) folds into the Radical SAM core domain. The cysteines at positions 139 and 378 are disulfide-linked. 3 residues coordinate [4Fe-4S] cluster: C146, C150, and C153. S-adenosyl-L-methionine-binding positions include 204–205 (GE), S236, 258–260 (SLH), and N335. The S-methylcysteine intermediate role is filled by C378.

The protein belongs to the radical SAM superfamily. RlmN family. [4Fe-4S] cluster serves as cofactor.

The protein resides in the cytoplasm. The enzyme catalyses adenosine(2503) in 23S rRNA + 2 reduced [2Fe-2S]-[ferredoxin] + 2 S-adenosyl-L-methionine = 2-methyladenosine(2503) in 23S rRNA + 5'-deoxyadenosine + L-methionine + 2 oxidized [2Fe-2S]-[ferredoxin] + S-adenosyl-L-homocysteine. The catalysed reaction is adenosine(37) in tRNA + 2 reduced [2Fe-2S]-[ferredoxin] + 2 S-adenosyl-L-methionine = 2-methyladenosine(37) in tRNA + 5'-deoxyadenosine + L-methionine + 2 oxidized [2Fe-2S]-[ferredoxin] + S-adenosyl-L-homocysteine. Its function is as follows. Specifically methylates position 2 of adenine 2503 in 23S rRNA and position 2 of adenine 37 in tRNAs. m2A2503 modification seems to play a crucial role in the proofreading step occurring at the peptidyl transferase center and thus would serve to optimize ribosomal fidelity. In Bradyrhizobium sp. (strain BTAi1 / ATCC BAA-1182), this protein is Dual-specificity RNA methyltransferase RlmN.